A 246-amino-acid chain; its full sequence is 4-aminobenzoate synthase (246 aa).

Residues E88, H95, E149, H181, D185, and H188 each contribute to the Fe(2+) site.

Belongs to the CADD family. As to quaternary structure, homodimer. Requires Fe(2+) as cofactor. Mn(2+) serves as cofactor.

In terms of biological role, involved in de novo para-aminobenzoate (PABA) biosynthesis. Acts as a self-sacrificing or 'suicide' enzyme that utilizes its own active site tyrosine residue(s) as the substrate for PABA synthesis. The side chain of the tyrosine residue is released from the protein backbone via cleavage of the C(alpha)-C(beta) bond, leaving a glycine in place of the original tyrosine residue. Reaction requires O(2) and a reduced dimetal cofactor. The polypeptide is 4-aminobenzoate synthase (Nitrosomonas europaea (strain ATCC 19718 / CIP 103999 / KCTC 2705 / NBRC 14298)).